The sequence spans 143 residues: Midkine (143 aa).

A signal peptide spans 1 to 20; sequence MQHRGFLLLTLLALLALTSA. 5 cysteine pairs are disulfide-bonded: Cys37-Cys61, Cys45-Cys70, Cys52-Cys74, Cys84-Cys116, and Cys94-Cys126.

The protein belongs to the pleiotrophin family. Homodimer. Interacts with ALK. Interacts with LRP1; promotes neuronal survival. Interacts with LRP2. Interacts with NCAM1. Interacts (via C-terminal) with PTPRZ1 (via chondroitin sulfate chains); this interaction is inhibited by PTN; this interaction promotes neuronal migration. Interacts with NCL; this interaction promotes NCL clustering and lateral movements of this complex into lipid rafts leading to MDK internalization. Interacts with LRP6 and LRP8: this interaction is calcium dependent. Interacts with ITGA4. Interacts with ITGA6. Interacts with ITGB1. Interacts with ITGA4:ITGB1 complex; this interaction mediates MDK-induced osteoblast cells migration through PXN phosphorylation. Interacts with ITGA6:ITGB1 complex; this interaction mediates MDK-induced neurite outgrowth. Interacts with NOTCH2; this interaction mediates a nuclear accumulation of NOTCH2 and therefore activation of NOTCH2 signaling leading to interaction between HES1 and STAT3. Interacts with GPC2 (via heparan sulfate chain); this interaction is inhibited by heparin followed by chondroitin sulfate E; this interaction induces GPC2 clustering through heparan sulfate chain; this interaction induces neuronal cell adhesion and neurite outgrowth. Interacts with SDC3; this interaction induces SDC3 clustering; this interaction induces neuronal cell adhesion and neurite outgrowth. Interacts with SDC1. Interacts with CSPG5; this interaction promotes elongation of oligodendroglial precursor-like cells. As to expression, expressed in various tumor cell lines. In insulinoma tissue predominantly expressed in precancerous lesions.

The protein resides in the secreted. Its function is as follows. Secreted protein that functions as a cytokine and growth factor and mediates its signal through cell-surface proteoglycan and non-proteoglycan receptors. Binds cell-surface proteoglycan receptors via their chondroitin sulfate (CS) groups. Thereby regulates many processes like inflammatory response, cell proliferation, cell adhesion, cell growth, cell survival, tissue regeneration, cell differentiation and cell migration. Participates in inflammatory processes by exerting two different activities. Firstly, mediates neutrophils and macrophages recruitment to the sites of inflammation both by direct action by cooperating namely with ITGB2 via LRP1 and by inducing chemokine expression. This inflammation can be accompanied by epithelial cell survival and smooth muscle cell migration after renal and vessel damage, respectively. Secondly, suppresses the development of tolerogenic dendric cells thereby inhibiting the differentiation of regulatory T cells and also promote T cell expansion through NFAT signaling and Th1 cell differentiation. Promotes tissue regeneration after injury or trauma. After heart damage negatively regulates the recruitment of inflammatory cells and mediates cell survival through activation of anti-apoptotic signaling pathways via MAPKs and AKT pathways through the activation of angiogenesis. Also facilitates liver regeneration as well as bone repair by recruiting macrophage at trauma site and by promoting cartilage development by facilitating chondrocyte differentiation. Plays a role in brain by promoting neural precursor cells survival and growth through interaction with heparan sulfate proteoglycans. Binds PTPRZ1 and promotes neuronal migration and embryonic neurons survival. Binds SDC3 or GPC2 and mediates neurite outgrowth and cell adhesion. Binds chondroitin sulfate E and heparin leading to inhibition of neuronal cell adhesion induced by binding with GPC2. Binds CSPG5 and promotes elongation of oligodendroglial precursor-like cells. Also binds ITGA6:ITGB1 complex; this interaction mediates MDK-induced neurite outgrowth. Binds LRP1; promotes neuronal survival. Binds ITGA4:ITGB1 complex; this interaction mediates MDK-induced osteoblast cells migration through PXN phosphorylation. Binds anaplastic lymphoma kinase (ALK) which induces ALK activation and subsequent phosphorylation of the insulin receptor substrate (IRS1), followed by the activation of mitogen-activated protein kinase (MAPK) and PI3-kinase, and the induction of cell proliferation. Promotes epithelial to mesenchymal transition through interaction with NOTCH2. During arteriogenesis, plays a role in vascular endothelial cell proliferation by inducing VEGFA expression and release which in turn induces nitric oxide synthase expression. Moreover activates vasodilation through nitric oxide synthase activation. Negatively regulates bone formation in response to mechanical load by inhibiting Wnt/beta-catenin signaling in osteoblasts. In addition plays a role in hippocampal development, working memory, auditory response, early fetal adrenal gland development and the female reproductive system. The chain is Midkine from Homo sapiens (Human).